Here is a 1222-residue protein sequence, read N- to C-terminus: BOS complex subunit NOMO1 (1222 aa).

Positions 1–31 (MLVGQGAGPLGPAVVTAAVVLLLSGVGPAHG) are cleaved as a signal peptide. At 32–1155 (SEDIVVGCGG…NPTRKLPEQD (1124 aa)) the chain is on the extracellular side. N-linked (GlcNAc...) asparagine glycosylation is found at Asn-50, Asn-218, and Asn-618. The chain crosses the membrane as a helical span at residues 1156 to 1176 (IAQGSYIALPLTLLVLLAGYN). Residues 1177–1222 (HDKLIPLLLQLTSRLQGVRALGQAASDNSGPEDAKRQAKKQKTRRT) lie on the Cytoplasmic side of the membrane. The interval 1198 to 1222 (GQAASDNSGPEDAKRQAKKQKTRRT) is disordered. Position 1205 is a phosphoserine (Ser-1205). Residues 1213 to 1222 (QAKKQKTRRT) are compositionally biased toward basic residues.

Component of the back of Sec61 (BOS) complex, composed of NCLN/Nicalin, NOMO (NOMO1, NOMO2 or NOMO3) and TMEM147. The BOS complex is part of the multi-pass translocon (MPT) complex, composed of three subcomplexes, the GEL complex (composed of RAB5IF/OPTI and TMCO1), the BOS complex (composed of NCLN/Nicalin, NOMO and TMEM147) and the PAT complex (composed of WDR83OS/Asterix and CCDC47). The MPT complex associates with the SEC61 complex. Due to the strong similarity between NOMO1, NOMO2 and NOMO3, similar interaction pattern probably occur for the three gene copies. As to expression, expressed in colon tumor tissue and in adjacent normal colonic mucosa.

The protein localises to the endoplasmic reticulum membrane. Its function is as follows. Component of the multi-pass translocon (MPT) complex that mediates insertion of multi-pass membrane proteins into the lipid bilayer of membranes. The MPT complex takes over after the SEC61 complex: following membrane insertion of the first few transmembrane segments of proteins by the SEC61 complex, the MPT complex occludes the lateral gate of the SEC61 complex to promote insertion of subsequent transmembrane regions. The sequence is that of BOS complex subunit NOMO1 (NOMO1) from Homo sapiens (Human).